The chain runs to 238 residues: Transcriptional activator HAC1 (238 aa).

Positions 1-39 are disordered; the sequence is MEMTDFELTSNSQSNLAIPTNFKSTLPPRKRAKTKEEKE. Positions 7–24 are enriched in polar residues; sequence ELTSNSQSNLAIPTNFKS. Positions 39–102 constitute a bZIP domain; that stretch reads EQRRIERILR…LTCSHDAFVA (64 aa). A basic motif region spans residues 41 to 61; it reads RRIERILRNRRAAHQSREKKR. The interval 67–74 is leucine-zipper; that stretch reads LERKCSLL. Residues 115–152 form a disordered region; sequence GASLDTRASSHSSSDTFTPSPLNCTMEPATLSPKSMRD. Residues 117-134 show a composition bias toward low complexity; it reads SLDTRASSHSSSDTFTPS.

Belongs to the bZIP family. As to quaternary structure, homodimer.

Its subcellular location is the nucleus. Its function is as follows. Transcriptional activator involved in the unfolded protein response (UPR) pathway. Recognizes and binds to the UPR element (UPRE) in the promoter of UPR-regulated genes such as KAR2, PDI1, EUG1 and FKB2. Increases the synthesis of endoplasmic reticulum-resident proteins required for protein folding as well as components of the secretory pathway. The protein is Transcriptional activator HAC1 (HAC1) of Saccharomyces cerevisiae (strain ATCC 204508 / S288c) (Baker's yeast).